The following is a 186-amino-acid chain: Ribosome-recycling factor (186 aa).

Belongs to the RRF family.

Its subcellular location is the cytoplasm. In terms of biological role, responsible for the release of ribosomes from messenger RNA at the termination of protein biosynthesis. May increase the efficiency of translation by recycling ribosomes from one round of translation to another. The chain is Ribosome-recycling factor from Burkholderia multivorans (strain ATCC 17616 / 249).